Here is a 459-residue protein sequence, read N- to C-terminus: Cysteine--tRNA ligase (459 aa).

Cys29 is a binding site for Zn(2+). Positions 31-41 (PTVYNLVHIGN) match the 'HIGH' region motif. The Zn(2+) site is built by Cys209, His234, and Glu238. The short motif at 267–271 (KMSKS) is the 'KMSKS' region element. Lys270 contributes to the ATP binding site.

It belongs to the class-I aminoacyl-tRNA synthetase family. Monomer. Requires Zn(2+) as cofactor.

It localises to the cytoplasm. The enzyme catalyses tRNA(Cys) + L-cysteine + ATP = L-cysteinyl-tRNA(Cys) + AMP + diphosphate. This Saccharophagus degradans (strain 2-40 / ATCC 43961 / DSM 17024) protein is Cysteine--tRNA ligase.